Consider the following 317-residue polypeptide: Probable porphobilinogen deaminase (317 aa).

Residue cysteine 234 is modified to S-(dipyrrolylmethanemethyl)cysteine.

It belongs to the HMBS family. The cofactor is dipyrromethane.

It catalyses the reaction 4 porphobilinogen + H2O = hydroxymethylbilane + 4 NH4(+). Its pathway is porphyrin-containing compound metabolism; protoporphyrin-IX biosynthesis; coproporphyrinogen-III from 5-aminolevulinate: step 2/4. Functionally, tetrapolymerization of the monopyrrole PBG into the hydroxymethylbilane pre-uroporphyrinogen in several discrete steps. The polypeptide is Probable porphobilinogen deaminase (Methanosarcina acetivorans (strain ATCC 35395 / DSM 2834 / JCM 12185 / C2A)).